The primary structure comprises 354 residues: Rhodopsin (354 aa).

Residues 1–36 are Extracellular-facing; it reads MNGTEGENFYIPMSNKTGVVRSPFDYPQYYLAEPWK. Residues Asn-2 and Asn-15 are each glycosylated (N-linked (GlcNAc...) asparagine). Residues 37 to 61 traverse the membrane as a helical segment; that stretch reads FSVLAAYMFFLIIAGFPVNFLTLYV. Residues 62-73 are Cytoplasmic-facing; that stretch reads TIQHKKLRQPLN. Residues 74–96 traverse the membrane as a helical segment; it reads YILLNLAVADLFMIFGGFPSTMI. The Extracellular segment spans residues 97-110; that stretch reads TSMNGYFVFGPSGC. An intrachain disulfide couples Cys-110 to Cys-187. Residues 111 to 133 traverse the membrane as a helical segment; the sequence is NFEGFFATLGGEIGLWSLVVLAI. Residues 134-136 carry the 'Ionic lock' involved in activated form stabilization motif; that stretch reads ERY. The Cytoplasmic segment spans residues 134 to 152; it reads ERYVVVCKPMSNFRFGSQH. A helical membrane pass occupies residues 153-173; sequence AFMGVGLTWIMAMACAFPPLV. Over 174-202 the chain is Extracellular; it reads GWSRYIPEGMQCSCGIDYYTLKPEVNNES. Asn-200 carries N-linked (GlcNAc...) asparagine glycosylation. The chain crosses the membrane as a helical span at residues 203–224; it reads FVIYMFVVHFSIPLTIIFFCYG. The Cytoplasmic portion of the chain corresponds to 225-252; it reads RLVCTVKEAAAQQQESETTQRAEREVTR. Residues 253 to 274 form a helical membrane-spanning segment; it reads MVIIMVIAFLICWLPYASVAFF. Topologically, residues 275-286 are extracellular; sequence IFCNQGSEFGPI. A helical transmembrane segment spans residues 287–308; the sequence is FMTIPAFFAKAASLYNPLIYIL. At Lys-296 the chain carries N6-(retinylidene)lysine. Over 309 to 354 the chain is Cytoplasmic; it reads MNKQFRNCMITTICCGKNPFEEEESTSASASKTEASSVSSSQVAPA. S-palmitoyl cysteine attachment occurs at residues Cys-322 and Cys-323. Positions 333–354 are disordered; that stretch reads STSASASKTEASSVSSSQVAPA. The segment covering 334-354 has biased composition (low complexity); the sequence is TSASASKTEASSVSSSQVAPA.

This sequence belongs to the G-protein coupled receptor 1 family. Opsin subfamily. Post-translationally, phosphorylated on some or all of the serine and threonine residues present in the C-terminal region. In terms of processing, contains one covalently linked retinal chromophore.

Its subcellular location is the membrane. It is found in the cell projection. The protein localises to the cilium. The protein resides in the photoreceptor outer segment. Its function is as follows. Photoreceptor required for image-forming vision at low light intensity. While most salt water fish species use retinal as chromophore, most freshwater fish use 3-dehydroretinal, or a mixture of retinal and 3-dehydroretinal. Light-induced isomerization of 11-cis to all-trans retinal triggers a conformational change that activates signaling via G-proteins. Subsequent receptor phosphorylation mediates displacement of the bound G-protein alpha subunit by arrestin and terminates signaling. The protein is Rhodopsin (rho) of Scyliorhinus canicula (Small-spotted catshark).